The sequence spans 803 residues: Bromodomain-containing protein 2 (803 aa).

Residue Met1 is modified to N-acetylmethionine. Position 6 is a phosphothreonine (Thr6). Position 37 is a phosphoserine (Ser37). A disordered region spans residues 53–73; sequence ALQLTPANPPPPEVSNPKKPG. One can recognise a Bromo 1 domain in the interval 74 to 180; it reads RVTNQLQYLH…KIFLQKVASM (107 aa). A protein-binding residues include Asp112, Tyr155, Asn156, Lys157, Asp160, and Asp161. Disordered regions lie at residues 268-348, 456-652, and 739-803; these read PPAQ…KLSE, EPLE…KRQL, and EKRL…SDSG. A compositionally biased stretch (low complexity) spans 285 to 298; sequence TTTPTPTAILAPGS. Ser298 and Ser301 each carry phosphoserine. Positions 316-332 are enriched in basic and acidic residues; it reads VRRESGRPIKPPRKDLP. The 110-residue stretch at 344 to 453 folds into the Bromo 2 domain; it reads GKLSEQLKHC…DVFEFRYAKM (110 aa). A compositionally biased stretch (acidic residues) spans 481–515; it reads SSEESSSESSSEEEEEEDEDEEEEEEESESSDSEE. The span at 545-567 shows a compositional bias: basic residues; it reads KPKRKREKKEKKKKRKAEKHRGR. The Nuclear localization signal motif lies at 556-560; the sequence is KKKRK. The segment covering 623–632 has biased composition (low complexity); the sequence is KTAPPALPAG. The 83-residue stretch at 634–716 folds into the NET domain; that stretch reads DSEEEEESRP…SCLRKKPRKP (83 aa). Residue Ser635 is modified to Phosphoserine. The span at 641-652 shows a compositional bias: basic and acidic residues; that stretch reads SRPMSYDEKRQL. Low complexity predominate over residues 777–797; the sequence is SASSSSSDSSSSSSSSSSSDT.

This sequence belongs to the BET family. In terms of assembly, homodimer. Interacts with E2F1. Interacts with (acetylated) STAT3; promoting STAT3 recruitment to chromatin. Interacts with CTCF; promoting BRD2 recruitment to chromatin.

The protein resides in the nucleus. It localises to the chromosome. Chromatin reader protein that specifically recognizes and binds histone H4 acetylated at 'Lys-5' and 'Lys-12' (H4K5ac and H4K12ac, respectively), thereby controlling gene expression and remodeling chromatin structures. Recruits transcription factors and coactivators to target gene sites, and activates RNA polymerase II machinery for transcriptional elongation. Plays a key role in genome compartmentalization via its association with CTCF and cohesin: recruited to chromatin by CTCF and promotes formation of topologically associating domains (TADs) via its ability to bind acetylated histones, contributing to CTCF boundary formation and enhancer insulation. Also recognizes and binds acetylated non-histone proteins, such as STAT3. Involved in inflammatory response by regulating differentiation of naive CD4(+) T-cells into T-helper Th17: recognizes and binds STAT3 acetylated at 'Lys-87', promoting STAT3 recruitment to chromatin. In addition to acetylated lysines, also recognizes and binds lysine residues on histones that are both methylated and acetylated on the same side chain to form N6-acetyl-N6-methyllysine (Kacme), an epigenetic mark of active chromatin associated with increased transcriptional initiation. Specifically binds histone H4 acetyl-methylated at 'Lys-5' and 'Lys-12' (H4K5acme and H4K12acme, respectively). This Bos taurus (Bovine) protein is Bromodomain-containing protein 2 (BRD2).